The following is a 268-amino-acid chain: Putative sgc region protein SgcQ (268 aa).

This sequence belongs to the BtpA family.

This is Putative sgc region protein SgcQ (sgcQ) from Escherichia coli (strain K12).